We begin with the raw amino-acid sequence, 463 residues long: Phytase A (463 aa).

Positions 1–19 (MAFFTVALSLYYLLSRVST) are cleaved as a signal peptide. An N-linked (GlcNAc...) asparagine glycan is attached at N26. Residues C29 and C38 are joined by a disulfide bond. N-linked (GlcNAc...) asparagine glycosylation occurs at N41. The 1D-myo-inositol hexakisphosphate site is built by Q48, Y49, R79, H80, R83, and T86. 4 cysteine pairs are disulfide-bonded: C69/C410, C211/C460, C260/C278, and C431/C439. The Nucleophile role is filled by H80. N-linked (GlcNAc...) asparagine glycans are attached at residues N103 and N118. Residue R163 coordinates 1D-myo-inositol hexakisphosphate. An N-linked (GlcNAc...) asparagine glycan is attached at N203. D207 serves as a coordination point for 1D-myo-inositol hexakisphosphate. A glycan (N-linked (GlcNAc...) asparagine) is linked at N226. K297 contributes to the 1D-myo-inositol hexakisphosphate binding site. 2 N-linked (GlcNAc...) asparagine glycosylation sites follow: N331 and N335. Positions 357 and 358 each coordinate 1D-myo-inositol hexakisphosphate. Residue N372 is glycosylated (N-linked (GlcNAc...) asparagine).

This sequence belongs to the histidine acid phosphatase family. Monomer. Seems to be cleaved into at least two pieces, most likely due to proteases in the supernatant. The N-terminal fragment, called phyB seems to retain phytase activity.

It localises to the secreted. The catalysed reaction is 1D-myo-inositol hexakisphosphate + H2O = 1D-myo-inositol 1,2,4,5,6-pentakisphosphate + phosphate. The enzyme catalyses 1D-myo-inositol 1,2,4,5,6-pentakisphosphate + H2O = 1D-myo-inositol 1,2,5,6-tetrakisphosphate + phosphate. It carries out the reaction 1D-myo-inositol 1,2,5,6-tetrakisphosphate + H2O = 1D-myo-inositol 1,2,6-trisphosphate + phosphate. It catalyses the reaction 1D-myo-inositol 1,2,6-trisphosphate + H2O = 1D-myo-inositol 1,2-bisphosphate + phosphate. The catalysed reaction is 1D-myo-inositol 1,2-bisphosphate + H2O = 1D-myo-inositol 2-phosphate + phosphate. Functionally, catalyzes the phosphate monoester hydrolysis of phytic acid (myo-inositol hexakisphosphate), which results in the stepwise formation of myo-inositol pentakis-, tetrakis-, tris-, bis-, and monophosphates, as well as the liberation of inorganic phosphate. Myo-inositol 2-monophosphate is the end product. Has a broad substrate specificity and is also able to dephosphorylate other classic acid phosphatase substrates such as p-nitrophenyl phosphate, phenyl phosphate, fructose 1,6-bisphosphate, fructose 6-phosphate, glucose 6-phosphate, ribose 5-phosphate, alpha-glycerophosphate, beta-glycerophosphate, 3-phosphoglycerate, as well as ADP and ATP. The chain is Phytase A from Emericella nidulans (strain FGSC A4 / ATCC 38163 / CBS 112.46 / NRRL 194 / M139) (Aspergillus nidulans).